The sequence spans 347 residues: Eukaryotic translation initiation factor 3 subunit H (347 aa).

The region spanning 6 to 149 (VCIDSSVALK…PSSTGPQGHT (144 aa)) is the MPN domain. The tract at residues 136 to 155 (SDTDPSSTGPQGHTTTTPSG) is disordered. Positions 138 to 155 (TDPSSTGPQGHTTTTPSG) are enriched in polar residues.

It belongs to the eIF-3 subunit H family. In terms of assembly, component of the eukaryotic translation initiation factor 3 (eIF-3) complex.

Its subcellular location is the cytoplasm. In terms of biological role, component of the eukaryotic translation initiation factor 3 (eIF-3) complex, which is involved in protein synthesis of a specialized repertoire of mRNAs and, together with other initiation factors, stimulates binding of mRNA and methionyl-tRNAi to the 40S ribosome. The eIF-3 complex specifically targets and initiates translation of a subset of mRNAs involved in cell proliferation. The chain is Eukaryotic translation initiation factor 3 subunit H from Yarrowia lipolytica (strain CLIB 122 / E 150) (Yeast).